Reading from the N-terminus, the 234-residue chain is Orotate phosphoribosyltransferase (234 aa).

Lysine 30 provides a ligand contact to 5-phospho-alpha-D-ribose 1-diphosphate. An orotate-binding site is contributed by 38–39; it reads FF. 5-phospho-alpha-D-ribose 1-diphosphate is bound by residues 76 to 77, arginine 103, lysine 104, lysine 107, histidine 109, and 128 to 136; these read YK and DDVITAGTA. Orotate contacts are provided by threonine 132 and arginine 160.

Belongs to the purine/pyrimidine phosphoribosyltransferase family. PyrE subfamily. Homodimer. Requires Mg(2+) as cofactor.

It carries out the reaction orotidine 5'-phosphate + diphosphate = orotate + 5-phospho-alpha-D-ribose 1-diphosphate. It functions in the pathway pyrimidine metabolism; UMP biosynthesis via de novo pathway; UMP from orotate: step 1/2. Its function is as follows. Catalyzes the transfer of a ribosyl phosphate group from 5-phosphoribose 1-diphosphate to orotate, leading to the formation of orotidine monophosphate (OMP). The sequence is that of Orotate phosphoribosyltransferase from Chromohalobacter salexigens (strain ATCC BAA-138 / DSM 3043 / CIP 106854 / NCIMB 13768 / 1H11).